An 871-amino-acid polypeptide reads, in one-letter code: MGRLRVLLLWLAWWLSQAGIAHGAGSVRLAGGLTLGGLFPVHARGAAGRACGTLKKEQGVHRLEAMLYALDRINADPELLPGVRLGARLLDTCSRDTYALEQALSFVQALIRGRGDGEEASVRCPGGVPPLRAAPPERVVAVVGASASSVSIMVANVLRLFAIPQISYASTAPELSDSTRYDFFSRVVPPDSYQAQAMVDIVRALGWNYVSTLASEGNYGESGVEAFVQISREAGGVCIAQSIKIPREPKPGEFHKVIRRLMETPNARGIIIFANEDDIRRVLEATRQANLTGHFLWVGSDSWGSKISPILNLEEEAVGAITILPKRASIDGFDQYFMTRSLENNRRNIWFAEFWEENFNCKLTSSGGQSDDSTRKCTGEERIGQDSTYEQEGKVQFVIDAVYAIAHALHSMHQALCPGHTGLCPAMEPTDGRTLLHYIRAVRFNGSAGTPVMFNENGDAPGRYDIFQYQATNGSASSGGYQAVGQWAEALRLDMEALQWSGDPHEVPPSQCSLPCGPGERKKMVKGVPCCWHCEACDGYRFQVDEFTCEACPGHMRPTPNHTGCRPTPVVRLTWSSPWAALPLLLAVLGIMATTTIIATFMRHNDTPIVRASGRELSYVLLTGIFLIYAITFLMVAEPCAAVCASRRLLLGLGTTLSYSALLTKTNRIYRIFEQGKRSVTPPPFISPTSQLVITFGLTSLQVVGVIAWLGAQPPHSVIDYEEQRTVDPEQARGVLKCDMSDLSLIGCLGYSLLLMVTCTVYAIKARGVPETFNEAKPIGFTMYTTCIIWLAFVPIFFGTAQSAEKIYIQTTTLTVSLSLSASVSLGMLYVPKTYVILFHPEQNVQKRKRSLKKTSTMAAPPKSENSEDAK.

The signal sequence occupies residues 1–23 (MGRLRVLLLWLAWWLSQAGIAHG). Over 24–579 (AGSVRLAGGL…VVRLTWSSPW (556 aa)) the chain is Extracellular. The cysteines at positions 51 and 93 are disulfide-linked. Residues Ser148, 169-171 (AST), and Tyr219 each bind L-glutamate. Disulfide bonds link Cys238–Cys530, Cys361–Cys377, Cys417–Cys424, Cys512–Cys531, Cys516–Cys534, Cys537–Cys549, and Cys552–Cys565. An N-linked (GlcNAc...) asparagine glycan is attached at Asn290. Residue Asp301 participates in L-glutamate binding. Lys394 is a binding site for L-glutamate. N-linked (GlcNAc...) asparagine glycans are attached at residues Asn445 and Asn473. N-linked (GlcNAc...) asparagine glycosylation is present at Asn561. The chain crosses the membrane as a helical span at residues 580 to 602 (AALPLLLAVLGIMATTTIIATFM). Residues 603–616 (RHNDTPIVRASGRE) lie on the Cytoplasmic side of the membrane. Residues 617 to 637 (LSYVLLTGIFLIYAITFLMVA) traverse the membrane as a helical segment. Residues 638-648 (EPCAAVCASRR) are Extracellular-facing. A helical membrane pass occupies residues 649-667 (LLLGLGTTLSYSALLTKTN). Residues 668–691 (RIYRIFEQGKRSVTPPPFISPTSQ) are Cytoplasmic-facing. The helical transmembrane segment at 692–712 (LVITFGLTSLQVVGVIAWLGA) threads the bilayer. Residues 713 to 742 (QPPHSVIDYEEQRTVDPEQARGVLKCDMSD) are Extracellular-facing. Residues 743–764 (LSLIGCLGYSLLLMVTCTVYAI) form a helical membrane-spanning segment. The Cytoplasmic portion of the chain corresponds to 765–777 (KARGVPETFNEAK). Residues 778–800 (PIGFTMYTTCIIWLAFVPIFFGT) traverse the membrane as a helical segment. Over 801-813 (AQSAEKIYIQTTT) the chain is Extracellular. A helical transmembrane segment spans residues 814-839 (LTVSLSLSASVSLGMLYVPKTYVILF). Residues 840–871 (HPEQNVQKRKRSLKKTSTMAAPPKSENSEDAK) lie on the Cytoplasmic side of the membrane. The interval 848–871 (RKRSLKKTSTMAAPPKSENSEDAK) is disordered.

It belongs to the G-protein coupled receptor 3 family. As to quaternary structure, homodimer. Interacts with GPR179. Interacts with photoreceptor synaptic protein LRIT1 (via its N-terminal extracellular domain). Detected in the outer plexiform layer in retina (at protein level).

The protein resides in the cell membrane. It is found in the endoplasmic reticulum membrane. It localises to the golgi apparatus membrane. Its subcellular location is the cell projection. The protein localises to the dendrite. Functionally, G-protein coupled receptor for glutamate. Ligand binding causes a conformation change that triggers signaling via guanine nucleotide-binding proteins (G proteins) and modulates the activity of down-stream effectors, such as adenylate cyclase. Signaling inhibits adenylate cyclase activity. Signaling stimulates TRPM1 channel activity and Ca(2+) uptake. Required for normal vision. The protein is Metabotropic glutamate receptor 6 (Grm6) of Mus musculus (Mouse).